Here is a 181-residue protein sequence, read N- to C-terminus: Protein Syd (181 aa).

It belongs to the Syd family.

It is found in the cell inner membrane. Functionally, interacts with the SecY protein in vivo. May bind preferentially to an uncomplexed state of SecY, thus functioning either as a chelating agent for excess SecY in the cell or as a regulatory factor that negatively controls the translocase function. The sequence is that of Protein Syd from Escherichia coli O81 (strain ED1a).